Reading from the N-terminus, the 35-residue chain is RQDMVDESVCYITDNNCNGGKCLRSKACHADPWEL.

2 cysteine pairs are disulfide-bonded: cysteine 10-cysteine 22 and cysteine 17-cysteine 28. The interval 31-33 (DPW) is keys region for toxin activity.

It belongs to the neurotoxin 16 (SFI) family. In terms of tissue distribution, expressed by the venom gland.

It is found in the secreted. Insecticidal toxin. This is U1-segestritoxin-Sf1a from Segestria florentina (Tube-web spider).